We begin with the raw amino-acid sequence, 132 residues long: CLAVATA3/ESR (CLE)-related protein TDIF (132 aa).

A signal peptide spans 1 to 26; it reads MDIDLLWSFGGWFFILFPETINYCMA. A helical membrane pass occupies residues 42–62; the sequence is SCSSLFFVALLIITILITMLQ. The span at 68 to 77 shows a compositional bias: polar residues; it reads EVTSLPTHQP. Positions 68–132 are disordered; it reads EVTSLPTHQP…PSGPNPISNR (65 aa). Over residues 87 to 96 the composition is skewed to low complexity; it reads STSSTATTTT. Residues 101-111 are compositionally biased toward basic residues; it reads KRTHHQSHPKP. Pro-123 and Pro-126 each carry hydroxyproline. The O-linked (Ara...) hydroxyproline glycan is linked to Pro-126.

Belongs to the CLV3/ESR signal peptide family. In terms of assembly, interacts specifically with the leucine-rich repeat receptor-like protein kinase TDR. In terms of processing, the TDIFp peptide contains two hydroxprolines, but hydroxylation had no direct effect on TDIFp activity. Post-translationally, the O-glycosylation (arabinosylation) of the hydroxyproline Pro-126 enhances binding affinity of the TDIFp peptide for its receptor.

It localises to the secreted. Its subcellular location is the extracellular space. It is found in the cell membrane. Functionally, extracellular signal peptide that regulates cell fate. Represses tracheary element differentiation but promotes the formation of procambial cells adjacent to phloem cells in the veins. In Zinnia elegans (Garden zinnia), this protein is CLAVATA3/ESR (CLE)-related protein TDIF.